Consider the following 252-residue polypeptide: NAC domain-containing protein 23 (252 aa).

One can recognise an NAC domain in the interval 12 to 177; that stretch reads MPPGFRFQPT…EMVLCRISNK (166 aa). Residues 110 to 183 mediate DNA binding; sequence TAVKRRFVFY…ISNKDLPKPP (74 aa). Residues 225 to 252 form a disordered region; the sequence is VDDAAAGTDDPGDLDEEIDDSMQRNHGG. A compositionally biased stretch (acidic residues) spans 234-244; sequence DPGDLDEEIDD.

In terms of assembly, forms heterodimers with NAC26. In terms of tissue distribution, expressed in stems and panicles. Expressed in developing endosperm.

It is found in the nucleus. The protein resides in the cytoplasm. Functionally, transcription factor involved in the regulation of seed size. Binds to DNA-specific sequences of CLPD1 and OAT promoters in vitro. This is NAC domain-containing protein 23 from Oryza sativa subsp. japonica (Rice).